Reading from the N-terminus, the 447-residue chain is Phosphoglucosamine mutase (447 aa).

Ser101 serves as the catalytic Phosphoserine intermediate. The Mg(2+) site is built by Ser101, Asp242, Asp244, and Asp246. Ser101 is modified (phosphoserine).

This sequence belongs to the phosphohexose mutase family. Mg(2+) serves as cofactor. Post-translationally, activated by phosphorylation.

The catalysed reaction is alpha-D-glucosamine 1-phosphate = D-glucosamine 6-phosphate. Functionally, catalyzes the conversion of glucosamine-6-phosphate to glucosamine-1-phosphate. This chain is Phosphoglucosamine mutase, found in Azorhizobium caulinodans (strain ATCC 43989 / DSM 5975 / JCM 20966 / LMG 6465 / NBRC 14845 / NCIMB 13405 / ORS 571).